Reading from the N-terminus, the 190-residue chain is Orotate phosphoribosyltransferase (190 aa).

Glu-114 to Ser-122 contacts 5-phospho-alpha-D-ribose 1-diphosphate. Orotate-binding residues include Thr-118 and Arg-146.

It belongs to the purine/pyrimidine phosphoribosyltransferase family. PyrE subfamily. In terms of assembly, homodimer. Requires Mg(2+) as cofactor.

The catalysed reaction is orotidine 5'-phosphate + diphosphate = orotate + 5-phospho-alpha-D-ribose 1-diphosphate. Its pathway is pyrimidine metabolism; UMP biosynthesis via de novo pathway; UMP from orotate: step 1/2. Catalyzes the transfer of a ribosyl phosphate group from 5-phosphoribose 1-diphosphate to orotate, leading to the formation of orotidine monophosphate (OMP). The polypeptide is Orotate phosphoribosyltransferase (Caldicellulosiruptor bescii (strain ATCC BAA-1888 / DSM 6725 / KCTC 15123 / Z-1320) (Anaerocellum thermophilum)).